The chain runs to 1358 residues: DNA-directed RNA polymerase subunit beta (1358 aa).

This sequence belongs to the RNA polymerase beta chain family. In terms of assembly, the RNAP catalytic core consists of 2 alpha, 1 beta, 1 beta' and 1 omega subunit. When a sigma factor is associated with the core the holoenzyme is formed, which can initiate transcription.

The catalysed reaction is RNA(n) + a ribonucleoside 5'-triphosphate = RNA(n+1) + diphosphate. DNA-dependent RNA polymerase catalyzes the transcription of DNA into RNA using the four ribonucleoside triphosphates as substrates. In Francisella philomiragia subsp. philomiragia (strain ATCC 25017 / CCUG 19701 / FSC 153 / O#319-036), this protein is DNA-directed RNA polymerase subunit beta.